The sequence spans 248 residues: Protein PARTING DANCERS homolog (248 aa).

Residues 1–10 show a composition bias toward polar residues; that stretch reads MERSTHSTGW. Residues 1–25 form a disordered region; the sequence is MERSTHSTGWTCLPPPPPEPAAPGR.

It belongs to the ERCC1/RAD10/SWI10 family. Interacts with SHOC1 (via C-terminus). Interacts with HEI10. In terms of tissue distribution, highly expressed in anthers and pistil during meiosis. Expressed in pollen mother cells (PMCs) during meiosis. Expressed at low levels in roots, shoots, leaves, flowers, and glumes.

Its subcellular location is the chromosome. It is found in the nucleus. It localises to the cytoplasm. The protein localises to the cell membrane. Its function is as follows. Essential for normal crossover (CO) formation during meiosis. Essential component for the formation of class I meiotic COs. Interacts with SHOC1, another meiotic component, to regulate CO formation, possibly by stabilizing the recombination intermediates during meiosis. PTD and SHOC1 may form transient heterotrimeric or heterotetrameric complexes with HEI10 and/or ZIP4 to promote class I COs formation. Does not seem to be involved in early meiotic recombination steps involving double-strand break (DSB) formation, processing, and single-strand invasion. Does not seem to be involved in homologous pairing or synaptonemal complex (SC) assembly. The chain is Protein PARTING DANCERS homolog from Oryza sativa subsp. japonica (Rice).